Reading from the N-terminus, the 61-residue chain is Alpha-conotoxin-like Sm1.1 (61 aa).

The signal sequence occupies residues 1–16; it reads MFTVFLLVVLATTVVS. The propeptide occupies 17–43; the sequence is FPSDRASDGRDDEAKDERSDMHESGRK. The interval 19 to 46 is disordered; that stretch reads SDRASDGRDDEAKDERSDMHESGRKGRG. The segment covering 21 to 42 has biased composition (basic and acidic residues); sequence RASDGRDDEAKDERSDMHESGR. 2 disulfides stabilise this stretch: cysteine 48-cysteine 53 and cysteine 49-cysteine 59. 4-hydroxyproline; partial is present on proline 55. At cysteine 59 the chain carries Cysteine amide.

It belongs to the conotoxin A superfamily. As to expression, expressed by the venom duct.

It localises to the secreted. In terms of biological role, alpha-conotoxins act on postsynaptic membranes, they bind to the nicotinic acetylcholine receptors (nAChR) and thus inhibit them. The chain is Alpha-conotoxin-like Sm1.1 from Conus stercusmuscarum (Fly-specked cone).